Reading from the N-terminus, the 434-residue chain is Acyl transferase 15 (434 aa).

Residues His-164 and Asp-371 each act as proton acceptor in the active site.

The protein belongs to the plant acyltransferase family.

Its function is as follows. Involved in the incorporation of ferulate into the cell wall. The sequence is that of Acyl transferase 15 from Oryza sativa subsp. japonica (Rice).